A 145-amino-acid chain; its full sequence is D-aminoacyl-tRNA deacylase (145 aa).

Residues 137-138 (GP) carry the Gly-cisPro motif, important for rejection of L-amino acids motif.

The protein belongs to the DTD family. As to quaternary structure, homodimer.

The protein resides in the cytoplasm. The enzyme catalyses glycyl-tRNA(Ala) + H2O = tRNA(Ala) + glycine + H(+). It carries out the reaction a D-aminoacyl-tRNA + H2O = a tRNA + a D-alpha-amino acid + H(+). An aminoacyl-tRNA editing enzyme that deacylates mischarged D-aminoacyl-tRNAs. Also deacylates mischarged glycyl-tRNA(Ala), protecting cells against glycine mischarging by AlaRS. Acts via tRNA-based rather than protein-based catalysis; rejects L-amino acids rather than detecting D-amino acids in the active site. By recycling D-aminoacyl-tRNA to D-amino acids and free tRNA molecules, this enzyme counteracts the toxicity associated with the formation of D-aminoacyl-tRNA entities in vivo and helps enforce protein L-homochirality. This is D-aminoacyl-tRNA deacylase from Salmonella agona (strain SL483).